The following is a 247-amino-acid chain: Putative cyclin-T1-1 (247 aa).

This sequence belongs to the cyclin family. Cyclin T subfamily.

The polypeptide is Putative cyclin-T1-1 (CYCT1-1) (Arabidopsis thaliana (Mouse-ear cress)).